The following is a 312-amino-acid chain: Olfactory receptor 2L2 (312 aa).

At 1–24 (MENYNQTSTDFILLGLFPQSRIGL) the chain is on the extracellular side. N5 carries N-linked (GlcNAc...) asparagine glycosylation. A helical membrane pass occupies residues 25–48 (FVFTLIFLIFLMALIGNLSMILLI). Over 49–56 (FLDIHLHT) the chain is Cytoplasmic. A helical membrane pass occupies residues 57–78 (PMYFLLSQLSLIDLNYISTIVP). At 79–99 (KMVYDFLYGNKSISFTGCGIQ) the chain is on the extracellular side. N-linked (GlcNAc...) asparagine glycosylation is present at N88. C96 and C188 are oxidised to a cystine. A helical transmembrane segment spans residues 100–119 (SFFFLTLAVAEGLLLTSMAY). Residues 120–138 (DRYVAICFPLHYPIRISKR) lie on the Cytoplasmic side of the membrane. The chain crosses the membrane as a helical span at residues 139–157 (VCVMMITGSWMISSINSCA). At 158–194 (HTVYALCIPYCKSRAINHFFCDVPAMLTLACTDTWVY) the chain is on the extracellular side. The chain crosses the membrane as a helical span at residues 195-218 (ESTVFLSSTIFLVLPFTGIACSYG). Residues 219-235 (RVLLAVYRMHSAEGRKK) lie on the Cytoplasmic side of the membrane. The helical transmembrane segment at 236–258 (AYSTCSTHLTVVSFYYAPFAYTY) threads the bilayer. Residues 259 to 271 (VRPRSLRSPTEDK) lie on the Extracellular side of the membrane. The helical transmembrane segment at 272 to 291 (ILAVFYTILTPMLNPIIYSL) threads the bilayer. The Cytoplasmic segment spans residues 292–312 (RNKEVMGALTQVIQKIFSVKM).

It belongs to the G-protein coupled receptor 1 family.

The protein resides in the cell membrane. In terms of biological role, odorant receptor. The polypeptide is Olfactory receptor 2L2 (OR2L2) (Homo sapiens (Human)).